The following is a 238-amino-acid chain: tRNA (guanine-N(7)-)-methyltransferase (238 aa).

Positions 68, 93, 120, and 143 each coordinate S-adenosyl-L-methionine. Aspartate 143 is a catalytic residue. Substrate contacts are provided by residues lysine 147, aspartate 179, and 216–219 (TKFE).

Belongs to the class I-like SAM-binding methyltransferase superfamily. TrmB family.

It carries out the reaction guanosine(46) in tRNA + S-adenosyl-L-methionine = N(7)-methylguanosine(46) in tRNA + S-adenosyl-L-homocysteine. Its pathway is tRNA modification; N(7)-methylguanine-tRNA biosynthesis. In terms of biological role, catalyzes the formation of N(7)-methylguanine at position 46 (m7G46) in tRNA. This Stutzerimonas stutzeri (strain A1501) (Pseudomonas stutzeri) protein is tRNA (guanine-N(7)-)-methyltransferase.